Here is a 378-residue protein sequence, read N- to C-terminus: Chaperone protein DnaJ (378 aa).

Positions 3-67 (DFYDTLGVNR…EKRARYDQFG (65 aa)) constitute a J domain. The CR-type zinc finger occupies 132 to 214 (GQEREIKIPH…CGGQGVKQVR (83 aa)). Zn(2+)-binding residues include C145, C148, C162, C165, C188, C191, C202, and C205. CXXCXGXG motif repeat units follow at residues 145 to 152 (CDVCRGTG), 162 to 169 (CSTCGGAG), 188 to 195 (CPTCSGSG), and 202 to 209 (CQSCGGQG).

The protein belongs to the DnaJ family. Homodimer. The cofactor is Zn(2+).

It is found in the cytoplasm. Its function is as follows. Participates actively in the response to hyperosmotic and heat shock by preventing the aggregation of stress-denatured proteins and by disaggregating proteins, also in an autonomous, DnaK-independent fashion. Unfolded proteins bind initially to DnaJ; upon interaction with the DnaJ-bound protein, DnaK hydrolyzes its bound ATP, resulting in the formation of a stable complex. GrpE releases ADP from DnaK; ATP binding to DnaK triggers the release of the substrate protein, thus completing the reaction cycle. Several rounds of ATP-dependent interactions between DnaJ, DnaK and GrpE are required for fully efficient folding. Also involved, together with DnaK and GrpE, in the DNA replication of plasmids through activation of initiation proteins. This is Chaperone protein DnaJ from Prochlorococcus marinus (strain SARG / CCMP1375 / SS120).